The primary structure comprises 332 residues: Glycerol-3-phosphate dehydrogenase [NAD(P)+] (332 aa).

Residues W11, R30, and K108 each coordinate NADPH. The sn-glycerol 3-phosphate site is built by K108, G137, and S139. A141 serves as a coordination point for NADPH. Positions 192, 245, 255, 256, and 257 each coordinate sn-glycerol 3-phosphate. Residue K192 is the Proton acceptor of the active site. NADPH is bound at residue R256. NADPH is bound by residues V280 and E282.

It belongs to the NAD-dependent glycerol-3-phosphate dehydrogenase family.

The protein localises to the cytoplasm. The enzyme catalyses sn-glycerol 3-phosphate + NAD(+) = dihydroxyacetone phosphate + NADH + H(+). The catalysed reaction is sn-glycerol 3-phosphate + NADP(+) = dihydroxyacetone phosphate + NADPH + H(+). Its pathway is membrane lipid metabolism; glycerophospholipid metabolism. Functionally, catalyzes the reduction of the glycolytic intermediate dihydroxyacetone phosphate (DHAP) to sn-glycerol 3-phosphate (G3P), the key precursor for phospholipid synthesis. This chain is Glycerol-3-phosphate dehydrogenase [NAD(P)+], found in Burkholderia thailandensis (strain ATCC 700388 / DSM 13276 / CCUG 48851 / CIP 106301 / E264).